A 142-amino-acid chain; its full sequence is Large ribosomal subunit protein mL42 (142 aa).

The transit peptide at 1–32 directs the protein to the mitochondrion; sequence MALAAVKWAISSRTMLKHLFPVENGALYCVGH.

This sequence belongs to the mitochondrion-specific ribosomal protein mL42 family. Component of the mitochondrial ribosome large subunit (39S) which comprises a 16S rRNA and about 50 distinct proteins. Component of the mitochondrial ribosome small subunit (28S) which comprises a 12S rRNA and about 30 distinct proteins.

The protein resides in the mitochondrion. The polypeptide is Large ribosomal subunit protein mL42 (MRPL42) (Bos taurus (Bovine)).